The sequence spans 82 residues: Protein costars (82 aa).

It belongs to the costars family.

Modulates actin dynamics and cell motility. This is Protein costars (cosA) from Dictyostelium discoideum (Social amoeba).